Here is a 518-residue protein sequence, read N- to C-terminus: Chromosomal replication initiator protein DnaA (518 aa).

The tract at residues 1–72 is domain I, interacts with DnaA modulators; sequence MTLAEFWPLC…VREELAAGRS (72 aa). A domain II region spans residues 72–180; that stretch reads SAFVFKPGEG…DAEEARYEQT (109 aa). The domain III, AAA+ region stretch occupies residues 181-397; it reads NLSPDYTFDT…GAFNRVGASS (217 aa). 4 residues coordinate ATP: glycine 225, glycine 227, lysine 228, and threonine 229. The domain IV, binds dsDNA stretch occupies residues 398-518; the sequence is RFMNRPVIDI…YEKLLILIQN (121 aa).

It belongs to the DnaA family. In terms of assembly, oligomerizes as a right-handed, spiral filament on DNA at oriC.

It is found in the cytoplasm. Plays an essential role in the initiation and regulation of chromosomal replication. ATP-DnaA binds to the origin of replication (oriC) to initiate formation of the DNA replication initiation complex once per cell cycle. Binds the DnaA box (a 9 base pair repeat at the origin) and separates the double-stranded (ds)DNA. Forms a right-handed helical filament on oriC DNA; dsDNA binds to the exterior of the filament while single-stranded (ss)DNA is stabiized in the filament's interior. The ATP-DnaA-oriC complex binds and stabilizes one strand of the AT-rich DNA unwinding element (DUE), permitting loading of DNA polymerase. After initiation quickly degrades to an ADP-DnaA complex that is not apt for DNA replication. Binds acidic phospholipids. The sequence is that of Chromosomal replication initiator protein DnaA from Neisseria meningitidis serogroup C / serotype 2a (strain ATCC 700532 / DSM 15464 / FAM18).